The sequence spans 917 residues: Methionine--tRNA ligase, cytoplasmic (917 aa).

Residues 44-54 carry the 'HIGH' region motif; the sequence is PYVNNVPHLGN. The short motif at 367 to 371 is the 'KMSKS' region element; that stretch reads KFSKS. Residue K370 participates in ATP binding. 2 disordered regions span residues 591-623 and 702-749; these read GSQDAQSSAPKTAEKPKQQKKQAPTKDKKGDKK and SCTP…AAAA. The segment covering 614-623 has biased composition (basic and acidic residues); the sequence is PTKDKKGDKK. Residues 702–713 are compositionally biased toward low complexity; the sequence is SCTPTPTSTPAS. Positions 732–741 are enriched in basic and acidic residues; that stretch reads EPKKAKEQKK. The 102-residue stretch at 756–857 folds into the tRNA-binding domain; that stretch reads DVGRLDMRVG…ADSKPGTPVV (102 aa).

This sequence belongs to the class-I aminoacyl-tRNA synthetase family.

The protein resides in the cytoplasm. The catalysed reaction is tRNA(Met) + L-methionine + ATP = L-methionyl-tRNA(Met) + AMP + diphosphate. This is Methionine--tRNA ligase, cytoplasmic from Caenorhabditis elegans.